Consider the following 411-residue polypeptide: Lissencephaly-1 homolog (411 aa).

A LisH domain is found at 9 to 41 (QREELNQAIADYLGSNGYGDSLETFRKEADVST). A coiled-coil region spans residues 56–83 (TSVIRLQKKVMELEAKLTEAEKEVIEGA). WD repeat units follow at residues 106 to 147 (GHRA…RSLK), 148 to 187 (GHTD…ECVK), 191 to 230 (GHDH…CVKT), 233 to 272 (GHRE…CKVE), 275 to 334 (DHEH…CLLT), 337 to 376 (GHDN…CMKT), and 379 to 411 (AHQH…WECR).

It belongs to the WD repeat LIS1/nudF family.

Its subcellular location is the cytoplasm. It localises to the cytoskeleton. The protein resides in the microtubule organizing center. It is found in the centrosome. Its function is as follows. Positively regulates the activity of the minus-end directed microtubule motor protein dynein. May enhance dynein-mediated microtubule sliding by targeting dynein to the microtubule plus end. Required for several dynein- and microtubule-dependent processes. This is Lissencephaly-1 homolog from Drosophila persimilis (Fruit fly).